A 315-amino-acid chain; its full sequence is COMPASS component SWD3 (315 aa).

WD repeat units lie at residues 53–93, 94–133, 136–178, 187–228, 238–278, and 285–315; these read SHAR…HTFI, GHTAPVISLTFNRKGNLLFTSSMDESIKIWDTLNGSLMKT, AHSE…KTLT, NGVV…RTFQ, HHSC…LLQL, and HHSSPVMSIHCFGNIMCSLALNGDCCLWRWV.

Component of the Set1C/COMPASS complex which consists of SET1(2), BRE2(2), SPP1(2), SDC1(1), SHG1(1), SWD1(1), SWD2(1), and SWD3(1).

It is found in the nucleus. Its subcellular location is the chromosome. It localises to the telomere. Functionally, the COMPASS (Set1C) complex specifically mono-, di- and trimethylates histone H3 to form H3K4me1/2/3, which subsequently plays a role in telomere length maintenance and transcription elongation regulation. COMPASS recognizes ubiquitinated H2B on one face of the nucleosome which stimulates the methylation of H3 on the opposing face. SWD3/CPS30 establishes COMPASS trimethylation activity and may also serve as the anchor point to properly tether and space the other subunits. The chain is COMPASS component SWD3 from Saccharomyces cerevisiae (strain ATCC 204508 / S288c) (Baker's yeast).